The chain runs to 134 residues: T-cell receptor alpha chain V region RL-5 (134 aa).

The N-terminal stretch at 1–20 is a signal peptide; it reads MFSASCSVTVVVLLITVRRT. The v segment stretch occupies residues 21-114; that stretch reads NGASVTQTEG…DSAVYYCALR (94 aa). Residues 115-134 form a j segment region; the sequence is RGASNKLTLGTGTLLKVELN. A glycan (N-linked (GlcNAc...) asparagine) is linked at N134.

In terms of processing, rearrangement with the C region would elongate the sequence with Ile-Thr-; which creates a potential N-glycosylation site at Asn-134.

This is T-cell receptor alpha chain V region RL-5 from Oryctolagus cuniculus (Rabbit).